The sequence spans 213 residues: Orotate phosphoribosyltransferase (213 aa).

Lys26 is a 5-phospho-alpha-D-ribose 1-diphosphate binding site. Residue 34 to 35 coordinates orotate; that stretch reads FF. 5-phospho-alpha-D-ribose 1-diphosphate-binding positions include 72–73, Arg98, Lys99, Lys102, His104, and 123–131; these read YK and DDVISAGTS. 2 residues coordinate orotate: Ser127 and Arg155.

Belongs to the purine/pyrimidine phosphoribosyltransferase family. PyrE subfamily. As to quaternary structure, homodimer. Requires Mg(2+) as cofactor.

The enzyme catalyses orotidine 5'-phosphate + diphosphate = orotate + 5-phospho-alpha-D-ribose 1-diphosphate. It functions in the pathway pyrimidine metabolism; UMP biosynthesis via de novo pathway; UMP from orotate: step 1/2. In terms of biological role, catalyzes the transfer of a ribosyl phosphate group from 5-phosphoribose 1-diphosphate to orotate, leading to the formation of orotidine monophosphate (OMP). This is Orotate phosphoribosyltransferase from Neisseria meningitidis serogroup C (strain 053442).